The sequence spans 292 residues: Acetylglutamate kinase (292 aa).

Substrate is bound by residues 64–65, Arg-86, and Asn-190; that span reads GG.

This sequence belongs to the acetylglutamate kinase family. ArgB subfamily.

It localises to the cytoplasm. It catalyses the reaction N-acetyl-L-glutamate + ATP = N-acetyl-L-glutamyl 5-phosphate + ADP. The protein operates within amino-acid biosynthesis; L-arginine biosynthesis; N(2)-acetyl-L-ornithine from L-glutamate: step 2/4. Its function is as follows. Catalyzes the ATP-dependent phosphorylation of N-acetyl-L-glutamate. This is Acetylglutamate kinase from Geobacter metallireducens (strain ATCC 53774 / DSM 7210 / GS-15).